The sequence spans 339 residues: Protein FAM131B (339 aa).

The disordered stretch occupies residues 1 to 22; the sequence is MDSTSSLHGSSLHRPSTEQTRT. 3 positions are modified to phosphoserine: S47, S114, and S117. Residues 222–339 are disordered; sequence GPAFGDSQPS…PLLTQPSTPA (118 aa). 2 stretches are compositionally biased toward polar residues: residues 239–250 and 324–339; these read QPASGYSAQEPS and PTTS…STPA. T325 is subject to Phosphothreonine. The residue at position 327 (S327) is a Phosphoserine.

This sequence belongs to the FAM131 family.

The polypeptide is Protein FAM131B (FAM131B) (Bos taurus (Bovine)).